The chain runs to 450 residues: Ornithine decarboxylase (450 aa).

N6-(pyridoxal phosphate)lysine is present on K59. Residues S190, G227, and 264 to 267 (EPGR) contribute to the pyridoxal 5'-phosphate site. Residue S293 is modified to Phosphoserine; by CK2. 321–322 (YD) contributes to the substrate binding site. C350 functions as the Proton donor; shared with dimeric partner in the catalytic mechanism. Substrate is bound at residue D351. Y379 is a pyridoxal 5'-phosphate binding site.

This sequence belongs to the Orn/Lys/Arg decarboxylase class-II family. In terms of assembly, homodimer. Only the dimer is catalytically active, as the active sites are constructed of residues from both monomers. The cofactor is pyridoxal 5'-phosphate.

The enzyme catalyses L-ornithine + H(+) = putrescine + CO2. It participates in amine and polyamine biosynthesis; putrescine biosynthesis via L-ornithine pathway; putrescine from L-ornithine: step 1/1. With respect to regulation, inhibited by antizymes (AZs) in response to polyamine levels. AZs inhibit the assembly of the functional homodimer by binding to ODC monomers and targeting them for ubiquitin-independent proteolytic destruction by the 26S proteasome. Functionally, catalyzes the first and rate-limiting step of polyamine biosynthesis that converts ornithine into putrescine, which is the precursor for the polyamines, spermidine and spermine. Polyamines are essential for cell proliferation and are implicated in cellular processes, ranging from DNA replication to apoptosis. The protein is Ornithine decarboxylase (ODC1) of Gallus gallus (Chicken).